The chain runs to 697 residues: Polyribonucleotide nucleotidyltransferase (697 aa).

Asp-484 and Asp-490 together coordinate Mg(2+). The KH domain occupies 551 to 610; the sequence is PRITTIWVKTDKIRDVIGSGGKNIRGITEATGVSIDIEDSGRINIASTSKEACDKAIKMI. The 69-residue stretch at 620–688 folds into the S1 motif domain; that stretch reads GKLYMGTVKK…KQGKIKLSRK (69 aa).

This sequence belongs to the polyribonucleotide nucleotidyltransferase family. The cofactor is Mg(2+).

The protein resides in the cytoplasm. The catalysed reaction is RNA(n+1) + phosphate = RNA(n) + a ribonucleoside 5'-diphosphate. Its function is as follows. Involved in mRNA degradation. Catalyzes the phosphorolysis of single-stranded polyribonucleotides processively in the 3'- to 5'-direction. The sequence is that of Polyribonucleotide nucleotidyltransferase from Geobacter sulfurreducens (strain ATCC 51573 / DSM 12127 / PCA).